A 257-amino-acid chain; its full sequence is MLVLLSCAKTMSAVSKVKVPLTTSPRFQKEAAEIALQMSQFSVDELERLLRVNAKIAVENYKRYQAFHAETTPELPALLAYTGIVFKRLNPKDFSAEDFGYAQEHLRLTSFCYGLLRPLDVIRAYRLEGDVVLPELGNQTLFSYWRSRLTDTFIEDIRSAGGILCNLASDEMKSLFDWKRVESEVRVVTPEFHVWKNGKLATIVVYTKMSRGEMTRFILKNKIGTPEELKGFSWEGFEFDESLSDERKLVFINGMGE.

It belongs to the UPF0246 family.

The polypeptide is UPF0246 protein BT_3869 (Bacteroides thetaiotaomicron (strain ATCC 29148 / DSM 2079 / JCM 5827 / CCUG 10774 / NCTC 10582 / VPI-5482 / E50)).